A 943-amino-acid polypeptide reads, in one-letter code: Isoleucine--tRNA ligase (943 aa).

A 'HIGH' region motif is present at residues 58 to 68 (PYANGKIHIGH). Position 567 (Glu567) interacts with L-isoleucyl-5'-AMP. The 'KMSKS' region motif lies at 608–612 (KMSKS). Residue Lys611 participates in ATP binding. 4 residues coordinate Zn(2+): Cys906, Cys909, Cys926, and Cys929.

The protein belongs to the class-I aminoacyl-tRNA synthetase family. IleS type 1 subfamily. In terms of assembly, monomer. It depends on Zn(2+) as a cofactor.

The protein localises to the cytoplasm. The enzyme catalyses tRNA(Ile) + L-isoleucine + ATP = L-isoleucyl-tRNA(Ile) + AMP + diphosphate. Its function is as follows. Catalyzes the attachment of isoleucine to tRNA(Ile). As IleRS can inadvertently accommodate and process structurally similar amino acids such as valine, to avoid such errors it has two additional distinct tRNA(Ile)-dependent editing activities. One activity is designated as 'pretransfer' editing and involves the hydrolysis of activated Val-AMP. The other activity is designated 'posttransfer' editing and involves deacylation of mischarged Val-tRNA(Ile). The polypeptide is Isoleucine--tRNA ligase (Pseudomonas putida (strain GB-1)).